The primary structure comprises 152 residues: SsrA-binding protein (152 aa).

The protein belongs to the SmpB family.

The protein resides in the cytoplasm. In terms of biological role, required for rescue of stalled ribosomes mediated by trans-translation. Binds to transfer-messenger RNA (tmRNA), required for stable association of tmRNA with ribosomes. tmRNA and SmpB together mimic tRNA shape, replacing the anticodon stem-loop with SmpB. tmRNA is encoded by the ssrA gene; the 2 termini fold to resemble tRNA(Ala) and it encodes a 'tag peptide', a short internal open reading frame. During trans-translation Ala-aminoacylated tmRNA acts like a tRNA, entering the A-site of stalled ribosomes, displacing the stalled mRNA. The ribosome then switches to translate the ORF on the tmRNA; the nascent peptide is terminated with the 'tag peptide' encoded by the tmRNA and targeted for degradation. The ribosome is freed to recommence translation, which seems to be the essential function of trans-translation. This chain is SsrA-binding protein, found in Rickettsia montanensis.